Consider the following 180-residue polypeptide: MIKDSEFYRLDGVPITKEEIRAISVEKLNICPEDIILDIGCGSGGMTVEISKRCKFVYAVDGSKDAIDTTLKNMDKFNVKNCEVYFGDAKDLISNFKVNKAFIGGTQNIESVIEKLNEKNVRNIVINTIVLENSVKVIQILERLNFSIEVISVLISYGKRISSGHMMLSKNPITIITAKK.

Residues threonine 16, 40-44 (GCGSG), aspartate 61, and alanine 89 contribute to the S-adenosyl-L-methionine site.

This sequence belongs to the methyltransferase superfamily. Archaeal-type CbiT family.

It carries out the reaction Co-precorrin-6B + S-adenosyl-L-methionine = Co-precorrin-7 + S-adenosyl-L-homocysteine + CO2. It functions in the pathway cofactor biosynthesis; adenosylcobalamin biosynthesis; cob(II)yrinate a,c-diamide from sirohydrochlorin (anaerobic route): step 8/10. Its function is as follows. Catalyzes the methylation of C-15 in cobalt-precorrin-6B followed by the decarboxylation of C-12 to form cobalt-precorrin-7. The protein is Probable cobalt-precorrin-6B C(15)-methyltransferase (decarboxylating) of Methanococcus vannielii (strain ATCC 35089 / DSM 1224 / JCM 13029 / OCM 148 / SB).